A 179-amino-acid chain; its full sequence is ATP synthase subunit delta (179 aa).

It belongs to the ATPase delta chain family. In terms of assembly, F-type ATPases have 2 components, F(1) - the catalytic core - and F(0) - the membrane proton channel. F(1) has five subunits: alpha(3), beta(3), gamma(1), delta(1), epsilon(1). F(0) has three main subunits: a(1), b(2) and c(10-14). The alpha and beta chains form an alternating ring which encloses part of the gamma chain. F(1) is attached to F(0) by a central stalk formed by the gamma and epsilon chains, while a peripheral stalk is formed by the delta and b chains.

The protein localises to the cell membrane. F(1)F(0) ATP synthase produces ATP from ADP in the presence of a proton or sodium gradient. F-type ATPases consist of two structural domains, F(1) containing the extramembraneous catalytic core and F(0) containing the membrane proton channel, linked together by a central stalk and a peripheral stalk. During catalysis, ATP synthesis in the catalytic domain of F(1) is coupled via a rotary mechanism of the central stalk subunits to proton translocation. Its function is as follows. This protein is part of the stalk that links CF(0) to CF(1). It either transmits conformational changes from CF(0) to CF(1) or is implicated in proton conduction. The chain is ATP synthase subunit delta from Mycoplasmopsis pulmonis (strain UAB CTIP) (Mycoplasma pulmonis).